The chain runs to 428 residues: Adenylosuccinate synthetase (428 aa).

GTP contacts are provided by residues 12–18 (GDEGKGK) and 40–42 (GHT). The active-site Proton acceptor is Asp-13. Mg(2+) contacts are provided by Asp-13 and Gly-40. IMP-binding positions include 13-16 (DEGK), 38-41 (NAGH), Thr-128, Arg-142, Gln-222, Thr-237, and Arg-301. The active-site Proton donor is the His-41. 297-303 (VNTGRAR) contacts substrate. GTP is bound by residues Arg-303, 329–331 (KLD), and 411–413 (STS).

It belongs to the adenylosuccinate synthetase family. In terms of assembly, homodimer. Requires Mg(2+) as cofactor.

The protein localises to the cytoplasm. It catalyses the reaction IMP + L-aspartate + GTP = N(6)-(1,2-dicarboxyethyl)-AMP + GDP + phosphate + 2 H(+). Its pathway is purine metabolism; AMP biosynthesis via de novo pathway; AMP from IMP: step 1/2. Its function is as follows. Plays an important role in the de novo pathway of purine nucleotide biosynthesis. Catalyzes the first committed step in the biosynthesis of AMP from IMP. This chain is Adenylosuccinate synthetase, found in Caulobacter sp. (strain K31).